The sequence spans 399 residues: uncharacterized protein (399 aa).

Positions 197-206 (ENSSASSVTS) are enriched in polar residues. The tract at residues 197 to 224 (ENSSASSVTSEECEQDVMDEQSAEDNEE) is disordered. The span at 207–224 (EECEQDVMDEQSAEDNEE) shows a compositional bias: acidic residues.

This is an uncharacterized protein from Diadromus pulchellus (Parasitic wasp).